Consider the following 271-residue polypeptide: GPN-loop GTPase 3 (271 aa).

GTP is bound at residue glycine 13–threonine 18. Residues glycine 70–asparagine 72 carry the Gly-Pro-Asn (GPN)-loop; involved in dimer interface motif. Position 173–176 (serine 173–aspartate 176) interacts with GTP.

The protein belongs to the GPN-loop GTPase family. As to quaternary structure, heterodimers with GPN1 or GPN2. Binds to RNA polymerase II (RNAPII).

In terms of biological role, small GTPase required for proper nuclear import of RNA polymerase II and III (RNAPII and RNAPIII). May act at an RNAP assembly step prior to nuclear import. This chain is GPN-loop GTPase 3, found in Kluyveromyces lactis (strain ATCC 8585 / CBS 2359 / DSM 70799 / NBRC 1267 / NRRL Y-1140 / WM37) (Yeast).